The primary structure comprises 1667 residues: Androglobin (1667 aa).

The span at 1–11 shows a compositional bias: basic residues; the sequence is MASKQTKKKEV. 3 disordered regions span residues 1–45, 347–387, and 540–566; these read MASK…KGKF, SLTT…KFSL, and GSDL…ITKA. Residues 70–411 enclose the Calpain catalytic domain; sequence KDKTGKSPVF…SLSDCSSAIQ (342 aa). The span at 353 to 384 shows a compositional bias: basic and acidic residues; that stretch reads APEKSDKVPKEKADARDIGKKRSKDGEKEKFK. Positions 554–566 are enriched in polar residues; the sequence is THSQTDLSQITKA. Positions 763-890 constitute a Globin; C-terminal part domain; sequence HICSMVSFVI…EEVSLVEWLD (128 aa). Heme b-binding residues include Gln792 and His824. Positions 906–935 constitute an IQ domain; it reads EVAAAIKIQAMWRGTYVRLLMKARIPDTKE. The region spanning 936 to 968 is the Globin; N-terminal part domain; that stretch reads NISVADTLQKVWAVLEMNLEQYAVSLLRLMFKS. 2 disordered regions span residues 1297 to 1355 and 1420 to 1522; these read INLG…QQED and TSDA…RSPT. The segment covering 1301 to 1315 has biased composition (polar residues); sequence SPDSHTISEGQKSSV. Basic and acidic residues-rich tracts occupy residues 1325–1340 and 1433–1450; these read EKSS…KQAP and TKPK…KEPN. Over residues 1451 to 1468 the composition is skewed to polar residues; it reads SKNSAGSESKEMTQTGSG. A compositionally biased stretch (low complexity) spans 1487–1498; that stretch reads STSSESGGVSSP. Residues 1499–1511 are compositionally biased toward basic and acidic residues; it reads GKEEREQSTRKEN. The segment covering 1512-1522 has biased composition (polar residues); it reads IQTGPRTRSPT. The stretch at 1588–1629 forms a coiled coil; it reads QEERLKLKDEVLDMYKEMQDSLDEARQKIFDIREEYRNKLLE. The segment at 1646-1667 is disordered; it reads KLETEKMTPAPDTQKKKKGKKK.

The protein in the central section; belongs to the globin family. In the N-terminal section; belongs to the peptidase C2 family. In terms of assembly, interacts with septin SEPT10; contributes to in vitro proteolytic cleavage of SEPT10 in a calmodulin-dependent manner. Interacts with CFAP69. Interacts with SPEF2. May interact with calmodulin.

Its subcellular location is the cell projection. It is found in the cilium. The protein resides in the flagellum. Probable chimeric globin with a bis-histidyl six-coordinate heme-iron atom through which it could bind dioxygen, carbon monoxide and nitric oxide. Required for sperm flagellum formation and maturation of elongating spermatids, thus playing an essential role in male fertility. The polypeptide is Androglobin (Homo sapiens (Human)).